We begin with the raw amino-acid sequence, 333 residues long: UDP-N-acetylenolpyruvoylglucosamine reductase (333 aa).

Positions leucine 12–aspartate 176 constitute an FAD-binding PCMH-type domain. Arginine 153 is an active-site residue. Serine 221 functions as the Proton donor in the catalytic mechanism. Glutamate 317 is an active-site residue.

It belongs to the MurB family. FAD is required as a cofactor.

It localises to the cytoplasm. It catalyses the reaction UDP-N-acetyl-alpha-D-muramate + NADP(+) = UDP-N-acetyl-3-O-(1-carboxyvinyl)-alpha-D-glucosamine + NADPH + H(+). It participates in cell wall biogenesis; peptidoglycan biosynthesis. In terms of biological role, cell wall formation. This Idiomarina loihiensis (strain ATCC BAA-735 / DSM 15497 / L2-TR) protein is UDP-N-acetylenolpyruvoylglucosamine reductase.